The chain runs to 811 residues: Transmembrane protease serine 6 (811 aa).

The interval 1–48 (MPRCFQLPCSTRMPTTEVPQAADGQGDAGDGEEAAEPEGKFKPPKNTK) is disordered. The Cytoplasmic portion of the chain corresponds to 1–59 (MPRCFQLPCSTRMPTTEVPQAADGQGDAGDGEEAAEPEGKFKPPKNTKRKNRDYVRFTP). Residues 8-18 (PCSTRMPTTEV) are compositionally biased toward polar residues. Residues 60-80 (LLLVLAALVSAGVMLWYFLGY) form a helical; Signal-anchor for type II membrane protein membrane-spanning segment. At 81-811 (KAEVTVSQVY…VINWIQQVLT (731 aa)) the chain is on the extracellular side. One can recognise an SEA domain in the interval 86 to 209 (VSQVYSGSLR…EGLVILEASV (124 aa)). Residues Asn138, Asn184, Asn216, Asn338, Asn433, and Asn453 are each glycosylated (N-linked (GlcNAc...) asparagine). CUB domains are found at residues 213–336 (VVLN…QDCQ) and 323–440 (FLLS…QISL). Residues Cys335 and Cys366 are joined by a disulfide bond. LDL-receptor class A domains are found at residues 445–477 (VQVY…CDGI), 478–514 (KDCP…DRQP), and 518–555 (NGSD…DGQS). Intrachain disulfides connect Cys458–Cys470, Cys464–Cys480, Cys474–Cys489, Cys491–Cys503, Cys497–Cys516, Cys510–Cys525, Cys531–Cys543, Cys538–Cys557, Cys551–Cys566, and Cys602–Cys618. Asn518 carries an N-linked (GlcNAc...) asparagine glycan. A Peptidase S1 domain is found at 577 to 811 (IVGGTVSSEG…VINWIQQVLT (235 aa)). Residues His617 and Asp668 each act as charge relay system in the active site. Intrachain disulfides connect Cys702-Cys768, Cys733-Cys747, and Cys758-Cys787. Residue Ser762 is the Charge relay system of the active site.

The protein belongs to the peptidase S1 family. As to quaternary structure, interacts with HJV. The single-chain zymogen undergoes autoproteolytic processing. This results in TMPRSS6 shedding from the cell surface and conversion into an activated two-chains form which is released extracellularly. The process involves a trans-activation mechanism that requires TMPRSS6 oligomerization. As to expression, expressed at highest levels in adult mice liver, kidney and uterus. Also strongly expressed within the nasal cavity by olfactory epithelial cells. A weak, but detectable, signal in adult mice tissues analyzed including brain, lung, heart, kidney, spleen, muscle, intestine, thymus and pancreas. No signal in residual embryonic yolk sac, developing kidney tubules or in embryonic tissues analyzed including lung, heart, gastrointestinal tract and epithelium of the oral cavity.

The protein localises to the cell membrane. Membrane-bound serine protease. Through the cleavage of cell surface HJV, a regulator of the expression of the iron absorption-regulating hormone hepicidin/HAMP, plays a role in iron homeostasis. The polypeptide is Transmembrane protease serine 6 (Tmprss6) (Mus musculus (Mouse)).